A 1021-amino-acid chain; its full sequence is Sodium/potassium-transporting ATPase subunit alpha-1 (1021 aa).

Residues 1–5 (MGKGV) constitute a propeptide that is removed on maturation. Over residues 1–11 (MGKGVGRDKYE) the composition is skewed to basic and acidic residues. The interval 1–36 (MGKGVGRDKYEPAAVSEHGDKKKAKKERDMDELKKE) is disordered. Topologically, residues 6–85 (GRDKYEPAAV…NALTPPPTTP (80 aa)) are cytoplasmic. Position 9 is an N6-acetyllysine (Lys9). A Phosphotyrosine modification is found at Tyr10. Ser16 is subject to Phosphoserine; by PKC. Lys21 is modified (N6-acetyllysine). Residues 26 to 36 (KERDMDELKKE) are compositionally biased toward basic and acidic residues. Phosphoserine occurs at positions 38 and 45. The tract at residues 80–82 (PPP) is phosphoinositide-3 kinase binding. The helical transmembrane segment at 86–106 (EWVKFCRQLFGGFSMLLWIGA) threads the bilayer. Residues 107–129 (VLCFLAYGIQAATEEEPQNDNLY) are Extracellular-facing. Residues 130 to 150 (LGVVLSAVVIITGCFSYYQEA) traverse the membrane as a helical segment. Residues 151-286 (KSSKIMESFK…GGQTPIAAEI (136 aa)) lie on the Cytoplasmic side of the membrane. The residue at position 226 (Ser226) is a Phosphoserine. Tyr258 is subject to Phosphotyrosine. A helical transmembrane segment spans residues 287–306 (EHFIHIITGVAVFLGVSFFI). Residues 307–318 (LSLILEYTWLEA) lie on the Extracellular side of the membrane. A helical membrane pass occupies residues 319 to 336 (VIFLIGIIVANVPEGLLA). The Cytoplasmic portion of the chain corresponds to 337–770 (TVTVCLTLTA…EEGRLIFDNL (434 aa)). Asp374 (4-aspartylphosphate intermediate) is an active-site residue. Ser450 and Ser482 each carry phosphoserine. Lys485 lines the ATP pocket. Tyr540 carries the phosphotyrosine modification. Residues 594-715 (RAAVPDAVGK…QGAIVAVTGD (122 aa)) form a mediates interaction with SCN7A region. The residue at position 666 (Ser666) is a Phosphoserine. Residues Asp715 and Asp719 each contribute to the Mg(2+) site. The chain crosses the membrane as a helical span at residues 771–790 (KKSIAYTLTSNIPEITPFLI). The Extracellular portion of the chain corresponds to 791–800 (FIIANIPLPL). Residues 801 to 821 (GTVTILCIDLGTDMVPAISLA) form a helical membrane-spanning segment. At 822–841 (YEQAESDIMKRQPRNPQTDK) the chain is on the cytoplasmic side. A helical transmembrane segment spans residues 842 to 864 (LVNERLISMAYGQIGMIQALGGF). At 865–916 (FTYFVIMAENGFLPNHLLGIRVTWDDRWINDVEDSYGQQWTYEQRKIVEFTC) the chain is on the extracellular side. A helical transmembrane segment spans residues 917–936 (HTAFFVSIVVVQWADLVICK). Residues 937–949 (TRRNSVFQQGMKN) are Cytoplasmic-facing. Ser941 is subject to Phosphoserine; by PKA. The chain crosses the membrane as a helical span at residues 950-968 (KILIFGLFEETALAAFLSY). Residues 969–983 (CPGMGVALRMYPLKP) lie on the Extracellular side of the membrane. The chain crosses the membrane as a helical span at residues 984-1004 (TWWFCAFPYSLLIFVYDEVRK). The Cytoplasmic segment spans residues 1005–1021 (LIIRRRPGGWVEKETYY).

This sequence belongs to the cation transport ATPase (P-type) (TC 3.A.3) family. Type IIC subfamily. In terms of assembly, the sodium/potassium-transporting ATPase is composed of a catalytic alpha subunit, an auxiliary non-catalytic beta subunit and an additional regulatory subunit. Interacts with regulatory subunit FXYD1. Interacts with regulatory subunit FXYD3. Interacts with SIK1. Interacts with SLC35G1 and STIM1. Interacts with CLN3; this interaction regulates the sodium/potassium-transporting ATPase complex localization at the plasma membrane. Interacts with SCN7A; activates ATP1A1 P-type sodium:potassium-exchanging transporter activity which indirectly signals to nearby neurons to regulate sodium homeostasis. Post-translationally, phosphorylation on Tyr-10 modulates pumping activity. Phosphorylation of Ser-941 by PKA modulates the response of ATP1A1 to PKC. Dephosphorylation by protein phosphatase 2A (PP2A) following increases in intracellular sodium, leading to increase catalytic activity.

The protein resides in the cell membrane. The protein localises to the basolateral cell membrane. It is found in the sarcolemma. Its subcellular location is the cell projection. It localises to the axon. The protein resides in the melanosome. It catalyses the reaction K(+)(out) + Na(+)(in) + ATP + H2O = K(+)(in) + Na(+)(out) + ADP + phosphate + H(+). Its activity is regulated as follows. Specifically inhibited by cardiac glycosides such as digoxin or ouabain. Functionally, this is the catalytic component of the active enzyme, which catalyzes the hydrolysis of ATP coupled with the exchange of sodium and potassium ions across the plasma membrane. This action creates the electrochemical gradient of sodium and potassium ions, providing the energy for active transport of various nutrients. Could also be part of an osmosensory signaling pathway that senses body-fluid sodium levels and controls salt intake behavior as well as voluntary water intake to regulate sodium homeostasis. The chain is Sodium/potassium-transporting ATPase subunit alpha-1 (ATP1A1) from Ovis aries (Sheep).